The chain runs to 784 residues: Toll-like receptor 2 (784 aa).

The first 20 residues, 1–20, serve as a signal peptide directing secretion; sequence MPRALWTAWVWAVIILSTEG. Over 21–587 the chain is Extracellular; the sequence is ASDQASSLSC…ARLSLSECHR (567 aa). The cysteines at positions 30 and 36 are disulfide-linked. 19 LRR repeats span residues 54-77, 78-101, 102-125, 126-150, 151-175, 176-199, 200-223, 224-250, 251-278, 279-308, 309-337, 338-361, 362-388, 389-414, 415-437, 438-457, 458-478, 479-500, and 501-524; these read VKSL…RCVN, LKTL…HLRN, LEYL…SLYV, LKFL…HLPN, LRTL…GLTF, LEEL…SIQN, ISHL…IVSS, LDCF…MSTS, VKKL…YVSG, ILEV…HLGN, VETL…LTGR, VKRV…HLKS, LEYL…AWPF, LQTL…TLEN, LNNL…WPGK, MKQL…CLPQ, TLEI…ILPQ, LKEL…FLPV, and LSVM…SFQQ. N114 carries N-linked (GlcNAc...) asparagine glycosylation. The N-linked (GlcNAc...) asparagine glycan is linked to N199. An intrachain disulfide couples C353 to C382. C432 and C454 form a disulfide bridge. N-linked (GlcNAc...) asparagine glycosylation occurs at N442. Positions 525–579 constitute an LRRCT domain; it reads LKTLEAGGNNFICSCDFLSFTQGQQALGRVLVDWPDDYRCDSPSHVRGQRVQDAR. A helical membrane pass occupies residues 588 to 608; sequence AAVVSAACCALFLLLLLTGVL. Residues 609 to 784 lie on the Cytoplasmic side of the membrane; sequence CHRFHGLWYM…WLNLRAAIRS (176 aa). The 144-residue stretch at 639–782 folds into the TIR domain; sequence ICYDAFVSYS…GFWLNLRAAI (144 aa). K754 participates in a covalent cross-link: Glycyl lysine isopeptide (Lys-Gly) (interchain with G-Cter in ubiquitin). Positions 761 to 778 match the ATG16L1-binding motif motif; it reads YLEWPVDETQQEGFWLNL.

It belongs to the Toll-like receptor family. As to quaternary structure, interacts with LY96, TLR1 and TLR6 (via extracellular domain). TLR2 seems to exist in heterodimers with either TLR1 or TLR6 before stimulation by the ligand. The heterodimers form bigger oligomers in response to their corresponding ligands as well as further heterotypic associations with other receptors such as CD14 and/or CD36. Binds MYD88 (via TIR domain). Interacts with TICAM1. Interacts with CNPY3. Interacts with ATG16L1. Interacts with PPP1R11. Interacts with TICAM2. Interacts with TIRAP. Ubiquitinated at Lys-754 by PPP1R11, leading to its degradation. Deubiquitinated by USP2. In terms of processing, glycosylation of Asn-442 is critical for secretion of the N-terminal ectodomain of TLR2.

It is found in the membrane. The protein localises to the cytoplasmic vesicle. The protein resides in the phagosome membrane. Its subcellular location is the membrane raft. Cooperates with LY96 to mediate the innate immune response to bacterial lipoproteins and other microbial cell wall components. Cooperates with TLR1 or TLR6 to mediate the innate immune response to bacterial lipoproteins or lipopeptides. Acts via MYD88 and TRAF6, leading to NF-kappa-B activation, cytokine secretion and the inflammatory response. May also promote apoptosis in response to lipoproteins. Forms activation clusters composed of several receptors depending on the ligand, these clusters trigger signaling from the cell surface and subsequently are targeted to the Golgi in a lipid-raft dependent pathway. Forms the cluster TLR2:TLR6:CD14:CD36 in response to diacylated lipopeptides and TLR2:TLR1:CD14 in response to triacylated lipopeptides. This chain is Toll-like receptor 2 (TLR2), found in Bos taurus (Bovine).